The primary structure comprises 225 residues: UPF0758 protein BCQ_4241 (225 aa).

The 123-residue stretch at 103 to 225 folds into the MPN domain; sequence SIRSPEDCAR…FVSLKEKGHI (123 aa). His174, His176, and Asp187 together coordinate Zn(2+). The short motif at 174–187 is the JAMM motif element; that stretch reads HNHPSGDPAPSRED.

It belongs to the UPF0758 family.

This is UPF0758 protein BCQ_4241 from Bacillus cereus (strain Q1).